Here is an 809-residue protein sequence, read N- to C-terminus: Phenylalanine--tRNA ligase beta subunit (809 aa).

The region spanning 39–152 is the tRNA-binding domain; sequence KDKWPNVYVG…ADALVGMLAS (114 aa). Residues 404–492 form the B5 domain; sequence KERNGIVLSL…RIAGYHTIPC (89 aa). Mg(2+)-binding residues include D470, D476, E479, and E480. Residues 717 to 808 form the FDX-ACB domain; that stretch reads NRFPAVERDL…LNTETGAVLR (92 aa).

The protein belongs to the phenylalanyl-tRNA synthetase beta subunit family. Type 1 subfamily. As to quaternary structure, tetramer of two alpha and two beta subunits. It depends on Mg(2+) as a cofactor.

Its subcellular location is the cytoplasm. It carries out the reaction tRNA(Phe) + L-phenylalanine + ATP = L-phenylalanyl-tRNA(Phe) + AMP + diphosphate + H(+). The protein is Phenylalanine--tRNA ligase beta subunit of Dehalococcoides mccartyi (strain CBDB1).